Here is a 419-residue protein sequence, read N- to C-terminus: UDP-N-acetylglucosamine 1-carboxyvinyltransferase (419 aa).

Phosphoenolpyruvate is bound at residue 22–23 (KN). R93 serves as a coordination point for UDP-N-acetyl-alpha-D-glucosamine. Residue C117 is the Proton donor of the active site. Residue C117 is modified to 2-(S-cysteinyl)pyruvic acid O-phosphothioketal. Residues 122 to 126 (RPVDQ), D305, and I327 each bind UDP-N-acetyl-alpha-D-glucosamine.

Belongs to the EPSP synthase family. MurA subfamily.

It localises to the cytoplasm. It catalyses the reaction phosphoenolpyruvate + UDP-N-acetyl-alpha-D-glucosamine = UDP-N-acetyl-3-O-(1-carboxyvinyl)-alpha-D-glucosamine + phosphate. It participates in cell wall biogenesis; peptidoglycan biosynthesis. Cell wall formation. Adds enolpyruvyl to UDP-N-acetylglucosamine. This is UDP-N-acetylglucosamine 1-carboxyvinyltransferase from Dichelobacter nodosus (strain VCS1703A).